The sequence spans 300 residues: Cis-3-alkyl-4-alkyloxetan-2-one decarboxylase (300 aa).

Residues 33-282 form the AB hydrolase-1 domain; it reads VVVMLHGNPS…DDANHYVLED (250 aa).

This sequence belongs to the AB hydrolase superfamily. As to quaternary structure, homotetramer. Forms a complex with OleC and OleD.

It localises to the cytoplasm. The enzyme catalyses a cis-3-alkyl-4-alkyloxetan-2-one = a cis-alkene + CO2. In terms of biological role, involved in olefin biosynthesis. Catalyzes the elimination of carbon dioxide from beta-lactones to form the final olefin product. In Xanthomonas campestris pv. campestris (strain ATCC 33913 / DSM 3586 / NCPPB 528 / LMG 568 / P 25), this protein is Cis-3-alkyl-4-alkyloxetan-2-one decarboxylase.